Consider the following 109-residue polypeptide: Putative pterin-4-alpha-carbinolamine dehydratase (109 aa).

It belongs to the pterin-4-alpha-carbinolamine dehydratase family.

It catalyses the reaction (4aS,6R)-4a-hydroxy-L-erythro-5,6,7,8-tetrahydrobiopterin = (6R)-L-erythro-6,7-dihydrobiopterin + H2O. This is Putative pterin-4-alpha-carbinolamine dehydratase from Halorhodospira halophila (strain DSM 244 / SL1) (Ectothiorhodospira halophila (strain DSM 244 / SL1)).